The chain runs to 141 residues: HTH-type transcriptional repressor NsrR (141 aa).

In terms of domain architecture, HTH rrf2-type spans 2-129 (QLTSFTDYGL…DNYTLADMVQ (128 aa)). A DNA-binding region (H-T-H motif) is located at residues 28 to 51 (ISQVTEVYGVSRNHMVKIINQLSR). [2Fe-2S] cluster is bound by residues Cys91, Cys96, and Cys102.

[2Fe-2S] cluster serves as cofactor.

Nitric oxide-sensitive repressor of genes involved in protecting the cell against nitrosative stress. May require iron for activity. In Yersinia enterocolitica serotype O:8 / biotype 1B (strain NCTC 13174 / 8081), this protein is HTH-type transcriptional repressor NsrR.